The sequence spans 364 residues: Mitogen-activated protein kinase 11 (364 aa).

The Protein kinase domain occupies 24-308 (LQGLRPVGSG…AAEALAHAYF (285 aa)). ATP-binding positions include 30–38 (VGSGAYGSV) and lysine 53. Position 71 (glutamate 71) interacts with nilotinib. The Proton acceptor role is filled by aspartate 168. Threonine 180 is subject to Phosphothreonine; by MAP2K3, MAP2K4 and MAP2K6. The short motif at 180 to 182 (TGY) is the TXY element. Tyrosine 182 is subject to Phosphotyrosine; by MAP2K3, MAP2K4 and MAP2K6. The disordered stretch occupies residues 312 to 331 (HDPDDEPEAEPYDESVEAKE). Residues 314–326 (PDDEPEAEPYDES) are compositionally biased toward acidic residues. Tyrosine 323 is modified (phosphotyrosine; by ZAP70).

This sequence belongs to the protein kinase superfamily. CMGC Ser/Thr protein kinase family. MAP kinase subfamily. Interacts with HDAC3 and DUSP16. Requires Mg(2+) as cofactor. In terms of processing, dually phosphorylated on Thr-180 and Tyr-182 by MAP2K3/MKK3, MAP2K4/MKK4 and MAP2K6/MKK6, which activates the enzyme.

It is found in the cytoplasm. Its subcellular location is the nucleus. It carries out the reaction L-seryl-[protein] + ATP = O-phospho-L-seryl-[protein] + ADP + H(+). The enzyme catalyses L-threonyl-[protein] + ATP = O-phospho-L-threonyl-[protein] + ADP + H(+). With respect to regulation, activated by phosphorylation on threonine and tyrosine by MAP2K3/MKK3, MAP2K4/MKK4 and MAP2K6/MKK6. MAP2K3/MKK3 and MAP2K6/MKK6 are both essential for the activation of MAPK11 induced by environmental stress. HDAC3 interacts directly and selectively with MAPK11 to repress ATF2 transcriptional activity, and regulate TNF gene expression in LPS-stimulated cells. Inhibited by SB203580 and pyridinyl-imidazole related compounds. Serine/threonine kinase which acts as an essential component of the MAP kinase signal transduction pathway. MAPK11 is one of the four p38 MAPKs which play an important role in the cascades of cellular responses evoked by extracellular stimuli such as pro-inflammatory cytokines or physical stress leading to direct activation of transcription factors. Accordingly, p38 MAPKs phosphorylate a broad range of proteins and it has been estimated that they may have approximately 200 to 300 substrates each. MAPK11 functions are mostly redundant with those of MAPK14. Some of the targets are downstream kinases which are activated through phosphorylation and further phosphorylate additional targets. RPS6KA5/MSK1 and RPS6KA4/MSK2 can directly phosphorylate and activate transcription factors such as CREB1, ATF1, the NF-kappa-B isoform RELA/NFKB3, STAT1 and STAT3, but can also phosphorylate histone H3 and the nucleosomal protein HMGN1. RPS6KA5/MSK1 and RPS6KA4/MSK2 play important roles in the rapid induction of immediate-early genes in response to stress or mitogenic stimuli, either by inducing chromatin remodeling or by recruiting the transcription machinery. On the other hand, two other kinase targets, MAPKAPK2/MK2 and MAPKAPK3/MK3, participate in the control of gene expression mostly at the post-transcriptional level, by phosphorylating ZFP36 (tristetraprolin) and ELAVL1, and by regulating EEF2K, which is important for the elongation of mRNA during translation. MKNK1/MNK1 and MKNK2/MNK2, two other kinases activated by p38 MAPKs, regulate protein synthesis by phosphorylating the initiation factor EIF4E2. In the cytoplasm, the p38 MAPK pathway is an important regulator of protein turnover. For example, CFLAR is an inhibitor of TNF-induced apoptosis whose proteasome-mediated degradation is regulated by p38 MAPK phosphorylation. Ectodomain shedding of transmembrane proteins is regulated by p38 MAPKs as well. In response to inflammatory stimuli, p38 MAPKs phosphorylate the membrane-associated metalloprotease ADAM17. Such phosphorylation is required for ADAM17-mediated ectodomain shedding of TGF-alpha family ligands, which results in the activation of EGFR signaling and cell proliferation. Additional examples of p38 MAPK substrates are the FGFR1. FGFR1 can be translocated from the extracellular space into the cytosol and nucleus of target cells, and regulates processes such as rRNA synthesis and cell growth. FGFR1 translocation requires p38 MAPK activation. In the nucleus, many transcription factors are phosphorylated and activated by p38 MAPKs in response to different stimuli. Classical examples include ATF1, ATF2, ATF6, ELK1, PTPRH, DDIT3, TP53/p53 and MEF2C and MEF2A. The p38 MAPKs are emerging as important modulators of gene expression by regulating chromatin modifiers and remodelers. The promoters of several genes involved in the inflammatory response, such as IL6, IL8 and IL12B, display a p38 MAPK-dependent enrichment of histone H3 phosphorylation on 'Ser-10' (H3S10ph) in LPS-stimulated myeloid cells. This phosphorylation enhances the accessibility of the cryptic NF-kappa-B-binding sites marking promoters for increased NF-kappa-B recruitment. Phosphorylates methyltransferase DOT1L on 'Ser-834', 'Thr-900', 'Ser-902', 'Thr-984', 'Ser-1001', 'Ser-1009' and 'Ser-1104'. This chain is Mitogen-activated protein kinase 11 (Mapk11), found in Mus musculus (Mouse).